The sequence spans 188 residues: Elongation factor P (188 aa).

Belongs to the elongation factor P family.

The protein localises to the cytoplasm. The protein operates within protein biosynthesis; polypeptide chain elongation. Involved in peptide bond synthesis. Stimulates efficient translation and peptide-bond synthesis on native or reconstituted 70S ribosomes in vitro. Probably functions indirectly by altering the affinity of the ribosome for aminoacyl-tRNA, thus increasing their reactivity as acceptors for peptidyl transferase. In Mycoplasmoides gallisepticum (strain R(low / passage 15 / clone 2)) (Mycoplasma gallisepticum), this protein is Elongation factor P.